Consider the following 397-residue polypeptide: Tryptophan synthase beta chain (397 aa).

Lysine 87 carries the N6-(pyridoxal phosphate)lysine modification.

This sequence belongs to the TrpB family. As to quaternary structure, tetramer of two alpha and two beta chains. It depends on pyridoxal 5'-phosphate as a cofactor.

The enzyme catalyses (1S,2R)-1-C-(indol-3-yl)glycerol 3-phosphate + L-serine = D-glyceraldehyde 3-phosphate + L-tryptophan + H2O. The protein operates within amino-acid biosynthesis; L-tryptophan biosynthesis; L-tryptophan from chorismate: step 5/5. In terms of biological role, the beta subunit is responsible for the synthesis of L-tryptophan from indole and L-serine. The polypeptide is Tryptophan synthase beta chain (Salmonella arizonae (strain ATCC BAA-731 / CDC346-86 / RSK2980)).